The primary structure comprises 235 residues: tRNA (guanine-N(1)-)-methyltransferase (235 aa).

S-adenosyl-L-methionine-binding positions include Gly-112 and 132–137 (LGDFVL).

The protein belongs to the RNA methyltransferase TrmD family. Homodimer.

The protein localises to the cytoplasm. The catalysed reaction is guanosine(37) in tRNA + S-adenosyl-L-methionine = N(1)-methylguanosine(37) in tRNA + S-adenosyl-L-homocysteine + H(+). In terms of biological role, specifically methylates guanosine-37 in various tRNAs. This Acaryochloris marina (strain MBIC 11017) protein is tRNA (guanine-N(1)-)-methyltransferase.